The primary structure comprises 354 residues: Uroporphyrinogen decarboxylase (354 aa).

Substrate is bound by residues 27–31 (RQAGR), Asp-77, Tyr-154, Thr-209, and His-327.

It belongs to the uroporphyrinogen decarboxylase family. As to quaternary structure, homodimer.

It is found in the cytoplasm. It catalyses the reaction uroporphyrinogen III + 4 H(+) = coproporphyrinogen III + 4 CO2. It functions in the pathway porphyrin-containing compound metabolism; protoporphyrin-IX biosynthesis; coproporphyrinogen-III from 5-aminolevulinate: step 4/4. Its function is as follows. Catalyzes the decarboxylation of four acetate groups of uroporphyrinogen-III to yield coproporphyrinogen-III. This is Uroporphyrinogen decarboxylase from Shigella flexneri serotype 5b (strain 8401).